Consider the following 1107-residue polypeptide: MLSRQRIPRILASRTSLAHSIRSFTSTTSSIRPVAAAGQHAVTRPRHERPTNLSSFSTYTALGKKNDKGFFDNSIEPLSEEERKANVEHAEAEAKEAESKQAKSKSSTSDAPPPAPEDGKAGAAGGSSAGSGSGADGGSGDGGKRGRKPGDKALAKPVVPEIYPQVMAIPIAKRPLFPGFYKAITIKDPNVAAAITEMIKRGQPYVGAFLFKDENADDDVIRNRDDVYDVGVFAQITSAFPMNNQNGEGASLTAILYPHRRIKLSELIPPGSPEAASIDGAKEGAAPEPVPEPIPKVTDESEQKGDVVASFEESAVTPRPEPSQKPYEPTSFLKKYPVSLVNVENLTEEPYDPKSQVIRAVTNEIVNVFKEVASMNSLFRDQISTFSMSQSTGNVMAEPAKLADFAAAVSAGEPAELQEVLSSLNVEERMHKALLVLKKEHVNAQLQSKITKDVEQKITKRQREYWLMEQMKGIRRELGIESDGKDKLVEKFKELADKLAMPEAVRKVFDDELNKLAHLEPAASEFNVTRNYLDWLTNIPWGQSSAENFDILNAVKVLDEDHYGLKDVKDRILEFIAVGKLRGTVEGKILCFVGPPGVGKTSIGKSIARALGRQYYRFSVGGLTDVAEIKGHRRTYVGALPGRVIQALKKCKTENPLILIDEIDKIGRGYQGDPSSALLELLDPEQNGSFLDHYLDVPVDLSKVLFVCTANLTDTIPRPLLDRMEVIRLSGYVADEKMAIAEKYLAPQAQEMAGLKGVDVQLTKDAIEELNKSYCRESGVRNLKKKIEQVYRKSALKIVQDLGEQALPESEALTEEGKAAQEETEKKKSEEAASGETSSPKAATEASEKETTEKPRVAMKIPEGVHVVINKDNLKDYVGPPIFTSDRLYDVTPPGVTMGLAWTSMGGAAMYVESILQSALTSKSAPSLEITGNLKTVMKESSAIAYSYAKAVMAKDFPKNRFFDKAKIHVHVPEGAVQKDGPSAGITMTTSLLSLALDTPIDPQIAMTGELTLTGKVLRIGGLREKTVAARRAGCKMVVFPEDNMSDWLELPENVKEGIEGRPVRWYSEVFDLIFPKLDREKANKSRIIEDDKSEKEESKKKNDDDE.

The N-terminal 31 residues, 1–31 (MLSRQRIPRILASRTSLAHSIRSFTSTTSSI), are a transit peptide targeting the mitochondrion. Disordered stretches follow at residues 32 to 152 (RPVA…PGDK) and 273 to 329 (PEAA…PYEP). Residues 51–60 (TNLSSFSTYT) are compositionally biased toward polar residues. Residues 80-101 (EEERKANVEHAEAEAKEAESKQ) are compositionally biased toward basic and acidic residues. A compositionally biased stretch (gly residues) spans 122–141 (GAAGGSSAGSGSGADGGSGD). Residues 142–152 (GGKRGRKPGDK) show a composition bias toward basic and acidic residues. The Lon N-terminal domain occupies 166–441 (VMAIPIAKRP…KALLVLKKEH (276 aa)). 594–601 (GPPGVGKT) contributes to the ATP binding site. The segment at 808 to 858 (PESEALTEEGKAAQEETEKKKSEEAASGETSSPKAATEASEKETTEKPRVA) is disordered. A compositionally biased stretch (basic and acidic residues) spans 815-831 (EEGKAAQEETEKKKSEE). Over residues 832 to 845 (AASGETSSPKAATE) the composition is skewed to low complexity. Basic and acidic residues predominate over residues 846–856 (ASEKETTEKPR). Positions 891 to 1077 (VTPPGVTMGL…SEVFDLIFPK (187 aa)) constitute a Lon proteolytic domain. Residues serine 983 and lysine 1026 contribute to the active site. The disordered stretch occupies residues 1085–1107 (KSRIIEDDKSEKEESKKKNDDDE).

It belongs to the peptidase S16 family. As to quaternary structure, homohexamer or homoheptamer. Organized in a ring with a central cavity.

The protein resides in the mitochondrion matrix. It carries out the reaction Hydrolysis of proteins in presence of ATP.. Functionally, ATP-dependent serine protease that mediates the selective degradation of misfolded, unassembled or oxidatively damaged polypeptides as well as certain short-lived regulatory proteins in the mitochondrial matrix. May also have a chaperone function in the assembly of inner membrane protein complexes. Participates in the regulation of mitochondrial gene expression and in the maintenance of the integrity of the mitochondrial genome. Binds to mitochondrial DNA in a site-specific manner. The polypeptide is Lon protease homolog, mitochondrial (pim1) (Neurospora crassa (strain ATCC 24698 / 74-OR23-1A / CBS 708.71 / DSM 1257 / FGSC 987)).